A 365-amino-acid polypeptide reads, in one-letter code: Carbamoyl phosphate synthase small chain (365 aa).

2 CPSase regions span residues 1-166 (MKRQ…PSPG) and 1-169 (MKRQ…GRGH). Positions 45, 218, and 220 each coordinate L-glutamine. The region spanning 170–357 (RVVLVDFGMK…LTMIENFKKE (188 aa)) is the Glutamine amidotransferase type-1 domain. The active-site Nucleophile is Cys-245. Residues Leu-246, Gln-249, Asn-287, Gly-289, and Tyr-290 each coordinate L-glutamine. Residues His-330 and Glu-332 contribute to the active site.

The protein belongs to the CarA family. Composed of two chains; the small (or glutamine) chain promotes the hydrolysis of glutamine to ammonia, which is used by the large (or ammonia) chain to synthesize carbamoyl phosphate. Tetramer of heterodimers (alpha,beta)4.

The catalysed reaction is hydrogencarbonate + L-glutamine + 2 ATP + H2O = carbamoyl phosphate + L-glutamate + 2 ADP + phosphate + 2 H(+). It carries out the reaction L-glutamine + H2O = L-glutamate + NH4(+). The protein operates within amino-acid biosynthesis; L-arginine biosynthesis; carbamoyl phosphate from bicarbonate: step 1/1. It participates in pyrimidine metabolism; UMP biosynthesis via de novo pathway; (S)-dihydroorotate from bicarbonate: step 1/3. In terms of biological role, small subunit of the glutamine-dependent carbamoyl phosphate synthetase (CPSase). CPSase catalyzes the formation of carbamoyl phosphate from the ammonia moiety of glutamine, carbonate, and phosphate donated by ATP, constituting the first step of 2 biosynthetic pathways, one leading to arginine and/or urea and the other to pyrimidine nucleotides. The small subunit (glutamine amidotransferase) binds and cleaves glutamine to supply the large subunit with the substrate ammonia. This Bacillus cereus (strain ZK / E33L) protein is Carbamoyl phosphate synthase small chain.